The sequence spans 188 residues: HTH-type transcriptional repressor AcnR (188 aa).

Residues Val10–Met70 form the HTH tetR-type domain. Positions Thr33 to Phe52 form a DNA-binding region, H-T-H motif. Residues Leu79–Val80, Arg130, and Asn134 contribute to the citrate site. A Mg(2+)-binding site is contributed by Glu181. Arg185 contributes to the citrate binding site.

Homodimer.

Its function is as follows. AcnR negatively controls the expression of the aconitase gene acn. The protein is HTH-type transcriptional repressor AcnR of Corynebacterium efficiens (strain DSM 44549 / YS-314 / AJ 12310 / JCM 11189 / NBRC 100395).